A 233-amino-acid polypeptide reads, in one-letter code: tRNA (guanine-N(1)-)-methyltransferase (233 aa).

S-adenosyl-L-methionine-binding positions include Gly-110 and Ile-130–Met-135.

Belongs to the RNA methyltransferase TrmD family. Homodimer.

The protein localises to the cytoplasm. It catalyses the reaction guanosine(37) in tRNA + S-adenosyl-L-methionine = N(1)-methylguanosine(37) in tRNA + S-adenosyl-L-homocysteine + H(+). Specifically methylates guanosine-37 in various tRNAs. The chain is tRNA (guanine-N(1)-)-methyltransferase from Finegoldia magna (strain ATCC 29328 / DSM 20472 / WAL 2508) (Peptostreptococcus magnus).